Reading from the N-terminus, the 180-residue chain is Pro-glucagon (180 aa).

A signal peptide spans 1 to 20; it reads MKSVYFVAGLFIMLAQGSWQ. The interval 23–58 is disordered; the sequence is LQDTEEKPRSVSASQTDMLDDPDQMNEDKRHSQGTF. Phosphoserine is present on S54. Positions 84–89 are excised as a propeptide; it reads NRNNIA. Phosphoserine occurs at positions 105 and 108. Position 127 is an arginine amide (R127). Residues 131-145 constitute a propeptide that is removed on maturation; sequence DFPEEVAIVEELGRR. Residues S150 and S152 each carry the phosphoserine modification.

This sequence belongs to the glucagon family. Post-translationally, proglucagon is post-translationally processed in a tissue-specific manner in pancreatic A cells and intestinal L cells. In pancreatic A cells, the major bioactive hormone is glucagon cleaved by PCSK2/PC2. In the intestinal L cells PCSK1/PC1 liberates GLP-1, GLP-2, glicentin and oxyntomodulin. GLP-1 is further N-terminally truncated by post-translational processing in the intestinal L cells resulting in GLP-1(7-37) GLP-1-(7-36)amide. The C-terminal amidation is neither important for the metabolism of GLP-1 nor for its effects on the endocrine pancreas.

It localises to the secreted. Its function is as follows. Plays a key role in glucose metabolism and homeostasis. Regulates blood glucose by increasing gluconeogenesis and decreasing glycolysis. A counterregulatory hormone of insulin, raises plasma glucose levels in response to insulin-induced hypoglycemia. Plays an important role in initiating and maintaining hyperglycemic conditions in diabetes. Potent stimulator of glucose-dependent insulin release. Also stimulates insulin release in response to IL6. Plays important roles on gastric motility and the suppression of plasma glucagon levels. May be involved in the suppression of satiety and stimulation of glucose disposal in peripheral tissues, independent of the actions of insulin. Has growth-promoting activities on intestinal epithelium. May also regulate the hypothalamic pituitary axis (HPA) via effects on LH, TSH, CRH, oxytocin, and vasopressin secretion. Increases islet mass through stimulation of islet neogenesis and pancreatic beta cell proliferation. Inhibits beta cell apoptosis. Functionally, stimulates intestinal growth and up-regulates villus height in the small intestine, concomitant with increased crypt cell proliferation and decreased enterocyte apoptosis. The gastrointestinal tract, from the stomach to the colon is the principal target for GLP-2 action. Plays a key role in nutrient homeostasis, enhancing nutrient assimilation through enhanced gastrointestinal function, as well as increasing nutrient disposal. Stimulates intestinal glucose transport and decreases mucosal permeability. In terms of biological role, significantly reduces food intake. Inhibits gastric emptying in humans. Suppression of gastric emptying may lead to increased gastric distension, which may contribute to satiety by causing a sensation of fullness. Its function is as follows. May modulate gastric acid secretion and the gastro-pyloro-duodenal activity. May play an important role in intestinal mucosal growth in the early period of life. This is Pro-glucagon (GCG) from Cavia porcellus (Guinea pig).